The chain runs to 361 residues: Probable pectinesterase 49 (361 aa).

The signal sequence occupies residues 1–22; that stretch reads MGYISLALVALLVFFASPVVLA. Residue Asn128 is glycosylated (N-linked (GlcNAc...) asparagine). Gln174 contacts substrate. The active-site Proton donor is Asp197. Asp218 serves as the catalytic Nucleophile. Substrate is bound by residues Arg275 and Trp277.

It belongs to the pectinesterase family. As to expression, expressed in flower buds.

The protein localises to the secreted. It is found in the cell wall. The enzyme catalyses [(1-&gt;4)-alpha-D-galacturonosyl methyl ester](n) + n H2O = [(1-&gt;4)-alpha-D-galacturonosyl](n) + n methanol + n H(+). It functions in the pathway glycan metabolism; pectin degradation; 2-dehydro-3-deoxy-D-gluconate from pectin: step 1/5. Functionally, acts in the modification of cell walls via demethylesterification of cell wall pectin. This chain is Probable pectinesterase 49 (PME49), found in Arabidopsis thaliana (Mouse-ear cress).